The primary structure comprises 328 residues: Naphthalene 1,2-dioxygenase/salicylate 5-hydroxylase systems, ferredoxin--NAD(P)(+), reductase component (328 aa).

Residues 1–89 (MELVVEPLNL…DCTIEIPESD (89 aa)) enclose the 2Fe-2S ferredoxin-type domain. [2Fe-2S] cluster-binding residues include Cys35, Cys40, Cys43, and Cys73. An FAD-binding FR-type domain is found at 96-193 (ARIVKGTVTA…SGPLGTAYLR (98 aa)).

Belongs to the bacterial ring-hydroxylating dioxygenase ferredoxin reductase family. In terms of assembly, ferredoxin reductase NagAa belongs to both the salicylate 5-hydroxylase (S5H) and the naphthalene 1,2-dioxygenase (NDO) multicomponent enzyme systems. The NDO multicomponent enzyme system is composed of an electron transfer component and a dioxygenase component (iron sulfur protein (ISP)). The electron transfer component is composed of a ferredoxin reductase (NagAa) and a ferredoxin (NagAb), and the dioxygenase component is formed by a large alpha subunit (NagAc) and a small beta subunit (NagAd). The S5H multicomponent enzyme system is composed of an electron transfer component and a monooxygenase component. The electron transfer component is comprised of a ferredoxin reductase (NagAa) and a ferredoxin (NagAb), and the monooxygenase component is formed by a large subunit (NagG) and a small subunit (NagH). [2Fe-2S] cluster serves as cofactor. It depends on FAD as a cofactor.

It catalyses the reaction 2 reduced [2Fe-2S]-[ferredoxin] + NAD(+) + H(+) = 2 oxidized [2Fe-2S]-[ferredoxin] + NADH. The catalysed reaction is 2 reduced [2Fe-2S]-[ferredoxin] + NADP(+) + H(+) = 2 oxidized [2Fe-2S]-[ferredoxin] + NADPH. It functions in the pathway aromatic compound metabolism; naphthalene degradation. Its function is as follows. Component of two multicomponent enzyme systems which are involved in the catabolism of naphthalene. Plays a role as an electron transfer component for both salicylate 5-hydroxylase (S5H) and naphthalene 1,2-dioxygenase (NDO) systems, by transferring electrons from NAD(P)H to the oxygenase component via the ferredoxin NagAb. The electron transport chain from the two systems can use both NADH and NADPH as electron donors at approximately similar rates. This Ralstonia sp protein is Naphthalene 1,2-dioxygenase/salicylate 5-hydroxylase systems, ferredoxin--NAD(P)(+), reductase component.